A 612-amino-acid chain; its full sequence is Protein lin-61 (612 aa).

MBT repeat units follow at residues 143–249 (YLWE…MDKI), 263–380 (NDMV…GYQL), 381–501 (NAKK…LVPP), and 508–607 (FRWD…LQPP).

As to quaternary structure, interacts preferentially with histone H3 that is dimethylated or trimethylated at 'Lys-9'.

The protein resides in the nucleus. It localises to the chromosome. In terms of biological role, synthetic multivulva class B (synMuvB) protein required to repress the induction of vulval development by Ras signaling. Unlike other synMuv proteins it does not associate with the multiprotein DRM complex and the NuRD-like complex. Interaction with methylated histone H3 is essential for vulva development. It has a role in maintaining genome stability. The chain is Protein lin-61 (lin-61) from Caenorhabditis elegans.